Reading from the N-terminus, the 288-residue chain is Lipoyl synthase (288 aa).

[4Fe-4S] cluster contacts are provided by C42, C47, C53, C68, C72, C75, and S280. Residues 54–269 (WGEGTATFMI…EKYGIELGFR (216 aa)) form the Radical SAM core domain.

This sequence belongs to the radical SAM superfamily. Lipoyl synthase family. [4Fe-4S] cluster serves as cofactor.

Its subcellular location is the cytoplasm. It carries out the reaction [[Fe-S] cluster scaffold protein carrying a second [4Fe-4S](2+) cluster] + N(6)-octanoyl-L-lysyl-[protein] + 2 oxidized [2Fe-2S]-[ferredoxin] + 2 S-adenosyl-L-methionine + 4 H(+) = [[Fe-S] cluster scaffold protein] + N(6)-[(R)-dihydrolipoyl]-L-lysyl-[protein] + 4 Fe(3+) + 2 hydrogen sulfide + 2 5'-deoxyadenosine + 2 L-methionine + 2 reduced [2Fe-2S]-[ferredoxin]. It functions in the pathway protein modification; protein lipoylation via endogenous pathway; protein N(6)-(lipoyl)lysine from octanoyl-[acyl-carrier-protein]: step 2/2. Catalyzes the radical-mediated insertion of two sulfur atoms into the C-6 and C-8 positions of the octanoyl moiety bound to the lipoyl domains of lipoate-dependent enzymes, thereby converting the octanoylated domains into lipoylated derivatives. The polypeptide is Lipoyl synthase (Flavobacterium johnsoniae (strain ATCC 17061 / DSM 2064 / JCM 8514 / BCRC 14874 / CCUG 350202 / NBRC 14942 / NCIMB 11054 / UW101) (Cytophaga johnsonae)).